Here is a 312-residue protein sequence, read N- to C-terminus: Olfactory receptor 6C2 (312 aa).

Residues 1–23 (MKNHTVIRTFILLGLTGDPHLQV) are Extracellular-facing. An N-linked (GlcNAc...) asparagine glycan is attached at Asn-3. The helical transmembrane segment at 24-44 (LLFIFLFLTYMLSVTGNLTII) threads the bilayer. The Cytoplasmic portion of the chain corresponds to 45-52 (TLTLVDHH). The chain crosses the membrane as a helical span at residues 53-73 (LKTPMYFFLRNFSFLEVSFTT). The Extracellular portion of the chain corresponds to 74-97 (VCIPRFLYNISMGDNTITYNACAS). An N-linked (GlcNAc...) asparagine glycan is attached at Asn-82. A disulfide bond links Cys-95 and Cys-187. A helical membrane pass occupies residues 98 to 118 (QIFFVILFGATEFFLLAAMSY). Topologically, residues 119–137 (DRYVAICKPLHYVVIMNNR) are cytoplasmic. The helical transmembrane segment at 138-158 (VCTLLVLCCWVAGLMIIVPPL) threads the bilayer. Residues 159-195 (SLGLQLEFCDSNAIDHFSCDAGPLLKISCSDTWVIEQ) are Extracellular-facing. The chain crosses the membrane as a helical span at residues 196-215 (MVILMAVFALIITLVCVILS). The Cytoplasmic segment spans residues 216 to 235 (YLYIVRTILKFPSVQQRKKA). Residues 236 to 256 (FSTCSSHMIVVSIAYGSCIFI) traverse the membrane as a helical segment. Topologically, residues 257 to 269 (YIKPSAKDEVAIN) are extracellular. A helical transmembrane segment spans residues 270-290 (KGVSVLTTSVAPLLNPFIYTL). The Cytoplasmic segment spans residues 291 to 312 (RNKQVKQAFSDSIKRIAFLSKK).

The protein belongs to the G-protein coupled receptor 1 family.

The protein localises to the cell membrane. In terms of biological role, odorant receptor. The protein is Olfactory receptor 6C2 (OR6C2) of Homo sapiens (Human).